Here is a 1121-residue protein sequence, read N- to C-terminus: Phytochrome 2 (1121 aa).

The 180-residue stretch at 214-393 (DIGLLCDTVV…VFGMQLNMEV (180 aa)) folds into the GAF domain. Residue C319 coordinates phytochromobilin. PAS domains are found at residues 608-679 (VANE…SQGE) and 742-813 (DYKT…TKFM). The region spanning 893–1113 (YIRQEIKNPL…VVYVELPMAQ (221 aa)) is the Histidine kinase domain.

Belongs to the phytochrome family. In terms of assembly, homodimer. In terms of processing, contains one covalently linked phytochromobilin chromophore.

Regulatory photoreceptor which exists in two forms that are reversibly interconvertible by light: the Pr form that absorbs maximally in the red region of the spectrum and the Pfr form that absorbs maximally in the far-red region. Photoconversion of Pr to Pfr induces an array of morphogenic responses, whereas reconversion of Pfr to Pr cancels the induction of those responses. Pfr controls the expression of a number of nuclear genes including those encoding the small subunit of ribulose-bisphosphate carboxylase, chlorophyll A/B binding protein, protochlorophyllide reductase, rRNA, etc. It also controls the expression of its own gene(s) in a negative feedback fashion. This is Phytochrome 2 (PHY2) from Ceratodon purpureus (Fire moss).